The primary structure comprises 436 residues: Trigger factor (436 aa).

Residues 161 to 246 (GMRVTMDFVG…LNKVEEQILP (86 aa)) enclose the PPIase FKBP-type domain.

Belongs to the FKBP-type PPIase family. Tig subfamily.

It localises to the cytoplasm. It catalyses the reaction [protein]-peptidylproline (omega=180) = [protein]-peptidylproline (omega=0). Functionally, involved in protein export. Acts as a chaperone by maintaining the newly synthesized protein in an open conformation. Functions as a peptidyl-prolyl cis-trans isomerase. The chain is Trigger factor from Aeromonas hydrophila subsp. hydrophila (strain ATCC 7966 / DSM 30187 / BCRC 13018 / CCUG 14551 / JCM 1027 / KCTC 2358 / NCIMB 9240 / NCTC 8049).